The chain runs to 329 residues: Ketol-acid reductoisomerase (NADP(+)) (329 aa).

The KARI N-terminal Rossmann domain occupies 1-181 (MKVYYEQDAN…GGTRSGVIET (181 aa)). NADP(+) is bound by residues 24 to 27 (YGSQ), Arg-47, and 82 to 85 (DQYQ). The active site involves His-107. Gly-133 is a binding site for NADP(+). A KARI C-terminal knotted domain is found at 182 to 327 (TFREETETDL…ARLRSMMPWL (146 aa)). The Mg(2+) site is built by Asp-190, Glu-194, Glu-226, and Glu-230. Residue Ser-251 participates in substrate binding.

This sequence belongs to the ketol-acid reductoisomerase family. Mg(2+) is required as a cofactor.

The catalysed reaction is (2R)-2,3-dihydroxy-3-methylbutanoate + NADP(+) = (2S)-2-acetolactate + NADPH + H(+). The enzyme catalyses (2R,3R)-2,3-dihydroxy-3-methylpentanoate + NADP(+) = (S)-2-ethyl-2-hydroxy-3-oxobutanoate + NADPH + H(+). Its pathway is amino-acid biosynthesis; L-isoleucine biosynthesis; L-isoleucine from 2-oxobutanoate: step 2/4. It functions in the pathway amino-acid biosynthesis; L-valine biosynthesis; L-valine from pyruvate: step 2/4. Functionally, involved in the biosynthesis of branched-chain amino acids (BCAA). Catalyzes an alkyl-migration followed by a ketol-acid reduction of (S)-2-acetolactate (S2AL) to yield (R)-2,3-dihydroxy-isovalerate. In the isomerase reaction, S2AL is rearranged via a Mg-dependent methyl migration to produce 3-hydroxy-3-methyl-2-ketobutyrate (HMKB). In the reductase reaction, this 2-ketoacid undergoes a metal-dependent reduction by NADPH to yield (R)-2,3-dihydroxy-isovalerate. This is Ketol-acid reductoisomerase (NADP(+)) from Oleidesulfovibrio alaskensis (strain ATCC BAA-1058 / DSM 17464 / G20) (Desulfovibrio alaskensis).